Here is an 83-residue protein sequence, read N- to C-terminus: Protein ORF5 (83 aa).

The protein belongs to the microviridae C protein family.

Its function is as follows. Plays a central role in the packaging of viral DNA into phage procapsid, which occurs in the late stage of infection. Can interact with the replicative complex after the completion of one round of DNA synthesis. When protein ORF5 is bound to the replicative form, the complex becomes accessible to procapsid and serves as a DNA packaging apparatus. The protein is Protein ORF5 of Spiroplasma melliferum (SpV4).